We begin with the raw amino-acid sequence, 673 residues long: Zinc finger and BTB domain-containing protein 16 (673 aa).

Residues 34-96 form the BTB domain; the sequence is CDVVIMVDSQ…AYTATLQAKA (63 aa). 3 positions are modified to phosphoserine; by PDPK1: Ser76, Ser184, and Ser197. Positions 200–300 are interaction with RUNX1T1; it reads KAAVDSLMTI…SARELHYGRE (101 aa). Disordered stretches follow at residues 215–236 and 249–332; these read QGTLQPPAGPEEPTLAGGGRHP and DEVP…KHLG. Ser256 is modified (phosphoserine; by PDPK1). Position 282 is a phosphothreonine; by PDPK1 (Thr282). 2 stretches are compositionally biased toward basic and acidic residues: residues 293–302 and 319–331; these read RELHYGREES and RPEHPAPPPEKHL. 8 C2H2-type zinc fingers span residues 404-426, 432-454, 461-483, 490-512, 518-540, 546-568, 574-596, and 602-624; these read EQCSVCGVELPDNEAVEQHRKLH, YGCELCGKRFLDSLRLRMHLLAH, FVCDQCGAQFSKEDALETHRQTH, VFCLLCGKRFQAQSALQQHMEVH, YICSECNRTFPSHTALKRHLRSH, YECEFCGSCFRDESTLKSHKRIH, YECNGCGKKFSLKHQLETHYRVH, and FECKLCHQRSRDYSAMIKHLRTH. Position 628 is a phosphoserine; by PDPK1 (Ser628). The C2H2-type 9 zinc-finger motif lies at 630–652; sequence YQCTICTEYCPSLSSMQKHMKGH.

The protein belongs to the krueppel C2H2-type zinc-finger protein family. Binds EPN1. Interacts with ZBTB32 and CUL3. Interacts with ATP7B. Interacts with transcriptional corepressor RUNX1T1 (via its N-terminus); the interaction increases the transcription repression activity of ZBTB16. Interacts (via C2H2-type zinc finger domains 1 and 2) with RNF112. Within the hematopoietic system, PLZF is expressed in bone marrow, early myeloid cell lines and peripheral blood mononuclear cells. Also expressed in the ovary, and at lower levels, in the kidney and lung.

It localises to the nucleus. The protein resides in the nuclear body. It participates in protein modification; protein ubiquitination. Its function is as follows. Acts as a transcriptional repressor. Transcriptional repression may be mediated through recruitment of histone deacetylases to target promoters. May play a role in myeloid maturation and in the development and/or maintenance of other differentiated tissues. Probable substrate-recognition component of an E3 ubiquitin-protein ligase complex which mediates the ubiquitination and subsequent proteasomal degradation of target proteins. The chain is Zinc finger and BTB domain-containing protein 16 (ZBTB16) from Homo sapiens (Human).